The primary structure comprises 66 residues: Large ribosomal subunit protein uL29 (66 aa).

Belongs to the universal ribosomal protein uL29 family.

The protein is Large ribosomal subunit protein uL29 of Geobacillus thermodenitrificans (strain NG80-2).